The chain runs to 142 residues: Multiprotein-bridging factor 1b (142 aa).

Residues 49–75 (NAGSNKAASSGTSLNTKKLDDDTENLS) are disordered. The segment covering 50–64 (AGSNKAASSGTSLNT) has biased composition (polar residues). Positions 65–75 (KKLDDDTENLS) are enriched in basic and acidic residues. In terms of domain architecture, HTH cro/C1-type spans 87 to 141 (IMQARGEKKLTQSQLAHLINEKPQVIQEYESGKAIPNQQILSKLERALGAKLRGK). The H-T-H motif DNA-binding region spans 98 to 117 (QSQLAHLINEKPQVIQEYES).

This sequence belongs to the MBF1 family. As to expression, expressed in leaves, roots, stems, petioles and shoots. Higher expression in flowers and siliques. Detected in leaf veins through development.

Its subcellular location is the nucleus. It is found in the nucleolus. Transcriptional coactivator that stimulates transcriptional activity by bridging regulatory proteins and TBP, thereby recruiting TBP to promoters occupied by DNA-binding regulators. The sequence is that of Multiprotein-bridging factor 1b (MBF1B) from Arabidopsis thaliana (Mouse-ear cress).